The sequence spans 122 residues: Large ribosomal subunit protein uL14 (122 aa).

Belongs to the universal ribosomal protein uL14 family. As to quaternary structure, part of the 50S ribosomal subunit. Forms a cluster with proteins L3 and L19. In the 70S ribosome, L14 and L19 interact and together make contacts with the 16S rRNA in bridges B5 and B8.

Functionally, binds to 23S rRNA. Forms part of two intersubunit bridges in the 70S ribosome. The protein is Large ribosomal subunit protein uL14 of Thermodesulfovibrio yellowstonii (strain ATCC 51303 / DSM 11347 / YP87).